The sequence spans 190 residues: dCTP deaminase, dUMP-forming (190 aa).

DCTP is bound by residues 101 to 106 (KSSLGR), aspartate 119, 127 to 129 (TLE), glutamine 148, tyrosine 162, and glutamine 174. Glutamate 129 functions as the Proton donor/acceptor in the catalytic mechanism. The disordered stretch occupies residues 163–190 (GSTRVGSKYQGQRGPTPSRSYQNFITST). Over residues 171–190 (YQGQRGPTPSRSYQNFITST) the composition is skewed to polar residues.

This sequence belongs to the dCTP deaminase family. In terms of assembly, homotrimer.

It catalyses the reaction dCTP + 2 H2O = dUMP + NH4(+) + diphosphate. It participates in pyrimidine metabolism; dUMP biosynthesis; dUMP from dCTP: step 1/1. Bifunctional enzyme that catalyzes both the deamination of dCTP to dUTP and the hydrolysis of dUTP to dUMP without releasing the toxic dUTP intermediate. The polypeptide is dCTP deaminase, dUMP-forming (Mycobacterium avium (strain 104)).